We begin with the raw amino-acid sequence, 188 residues long: Proline-rich protein 3 (188 aa).

The tract at residues 1–157 (MPKRKKQNHH…DPQVMEDKSD (157 aa)) is disordered. 2 stretches are compositionally biased toward pro residues: residues 35–46 (IGPPSLLGPPPM) and 69–82 (LIPP…PPWG). Over residues 83-96 (RGPIRRGLGPRSSP) the composition is skewed to low complexity. Positions 145–157 (PKDDPQVMEDKSD) are enriched in basic and acidic residues. The C3H1-type zinc finger occupies 155-183 (KSDRPVCRHFAKKGHCRYEDLCAFYHPGV).

The polypeptide is Proline-rich protein 3 (PRR3) (Homo sapiens (Human)).